The sequence spans 398 residues: Potassium channel subfamily K member 4 (398 aa).

At 1–3 (MRS) the chain is on the cytoplasmic side. A helical transmembrane segment spans residues 4–24 (TTLLALLALVLLYLVSGALVF). Residues 25-88 (QALEQPHEQQ…WTNSSNHSSA (64 aa)) lie on the Extracellular side of the membrane. 2 N-linked (GlcNAc...) asparagine glycosylation sites follow: Asn81 and Asn84. Residues 89–103 (WNLGSAFFFSGTIIT) constitute an intramembrane region (helical). K(+)-binding residues include Thr104, Ile105, Gly106, and Tyr107. Residues 104–109 (TIGYGN) form a selectivity filter 1 region. An intramembrane segment occupies 104–110 (TIGYGNI). Residues 111–118 (VLHTDAGR) are Extracellular-facing. Residues 119–151 (LFCIFYALVGIPLFGMLLAGVGDRLGSSLRRGI) traverse the membrane as a helical segment. Over 152-173 (GHIEAIFLKWHVPPGLVRSLSA) the chain is Cytoplasmic. The helical transmembrane segment at 174–195 (VLFLLIGCLLFVLTPTFVFSYM) threads the bilayer. The Extracellular segment spans residues 196 to 200 (ESWSK). The helical intramembrane region spans 201–214 (LEAIYFVIVTLTTV). Residues Thr213, Val214, Gly215, and Phe216 each contribute to the K(+) site. The segment at 213-218 (TVGFGD) is selectivity filter 2. Residues 215–220 (GFGDYV) lie within the membrane without spanning it. The Extracellular portion of the chain corresponds to 221 to 234 (PGDGTGQNSPAYQP). A helical transmembrane segment spans residues 235–261 (LVWFWILFGLAYFASVLTTIGNWLRAV). At 262 to 398 (SRRTRAEMGG…GRLRDKAVPV (137 aa)) the chain is on the cytoplasmic side. Positions 282-292 (TVTARVTQRTG) are enriched in polar residues. Residues 282 to 398 (TVTARVTQRT…GRLRDKAVPV (117 aa)) form a disordered region. The segment covering 370-389 (PRGRRRPNPSKKPSRPRGPG) has biased composition (basic residues).

Belongs to the two pore domain potassium channel (TC 1.A.1.8) family. In terms of assembly, homodimer; disulfide-linked. Forms heterodimers with other 2-pore domain K(+) channel subunits, such as KCNK2 and KCNK10. Post-translationally, N-glycosylated. In terms of tissue distribution, expressed in brain, spinal cord and eye. Not detected in heart, skeletal muscle, liver, lungs, kidney and testis.

It localises to the cell membrane. The protein localises to the cell projection. The protein resides in the axon. The catalysed reaction is K(+)(in) = K(+)(out). It catalyses the reaction Rb(+)(in) = Rb(+)(out). It carries out the reaction Cs(+)(in) = Cs(+)(out). Activated by arachidonic acid and other polyunsaturated fatty acids. Not affected by volatile general anesthetics such as chloroform, diethyl ether, halothane and isoflurane. Activated at intracellular and extracellular basic pHs. Its function is as follows. K(+) channel that conducts voltage-dependent outward rectifying currents upon membrane depolarization. Voltage sensing is coupled to K(+) electrochemical gradient in an 'ion flux gating' mode where outward but not inward ion flow opens the gate. Converts to voltage-independent 'leak' conductance mode upon stimulation by various stimuli including mechanical membrane stretch, basic pH, temperature and lipids. Homo- and heterodimerizes to form functional channels with distinct regulatory and gating properties. At trigeminal A-beta afferent nerves, the heterodimer of KCNK2/TREK-1 and KCNK4/TRAAK is mostly coexpressed at nodes of Ranvier where it conducts voltage-independent mechanosensitive and thermosensitive currents, allowing rapid action potential repolarization, high speed and high frequence saltatory conduction on myelinated nerves to ensure prompt sensory responses. Permeable to other monovalent cations such as Rb(+) and Cs(+). This Mus musculus (Mouse) protein is Potassium channel subfamily K member 4.